A 329-amino-acid chain; its full sequence is Endonuclease 8-like 2 (329 aa).

Residue Pro-2 is the Schiff-base intermediate with DNA of the active site. The active-site Proton donor is the Glu-3. Lys-50 acts as the Proton donor; for beta-elimination activity in catalysis. Lys-50 carries the post-translational modification N6-acetyllysine. Position 68 is a phosphoserine (Ser-68). Residues 88-112 (GPSAQEPSAGPSGSGEPVPSRSAET) are disordered. Lys-150 carries the N6-acetyllysine modification. DNA is bound at residue Asn-227. An FPG-type zinc finger spans residues 280–316 (QIYQKEQCPSGHQVMKETFGPPDGLQRLTWWCPQCQP). The active-site Proton donor; for delta-elimination activity is Arg-306.

It belongs to the FPG family. As to quaternary structure, binds EP300.

Its subcellular location is the nucleus. The enzyme catalyses 2'-deoxyribonucleotide-(2'-deoxyribose 5'-phosphate)-2'-deoxyribonucleotide-DNA = a 3'-end 2'-deoxyribonucleotide-(2,3-dehydro-2,3-deoxyribose 5'-phosphate)-DNA + a 5'-end 5'-phospho-2'-deoxyribonucleoside-DNA + H(+). Its activity is regulated as follows. Acetylation of Lys-50 leads to loss of DNA nicking activity. Involved in base excision repair of DNA damaged by oxidation or by mutagenic agents. Has DNA glycosylase activity towards 5-hydroxyuracil and other oxidized derivatives of cytosine with a preference for mismatched double-stranded DNA (DNA bubbles). Has low or no DNA glycosylase activity towards thymine glycol, 2-hydroxyadenine, hypoxanthine and 8-oxoguanine. Has AP (apurinic/apyrimidinic) lyase activity and introduces nicks in the DNA strand. Cleaves the DNA backbone by beta-delta elimination to generate a single-strand break at the site of the removed base with both 3'- and 5'-phosphates. This Mus musculus (Mouse) protein is Endonuclease 8-like 2 (Neil2).